A 123-amino-acid chain; its full sequence is Small ribosomal subunit protein uS12 (123 aa).

Position 89 is a 3-methylthioaspartic acid (Asp-89).

The protein belongs to the universal ribosomal protein uS12 family. As to quaternary structure, part of the 30S ribosomal subunit. Contacts proteins S8 and S17. May interact with IF1 in the 30S initiation complex.

In terms of biological role, with S4 and S5 plays an important role in translational accuracy. Its function is as follows. Interacts with and stabilizes bases of the 16S rRNA that are involved in tRNA selection in the A site and with the mRNA backbone. Located at the interface of the 30S and 50S subunits, it traverses the body of the 30S subunit contacting proteins on the other side and probably holding the rRNA structure together. The combined cluster of proteins S8, S12 and S17 appears to hold together the shoulder and platform of the 30S subunit. In Methylobacterium nodulans (strain LMG 21967 / CNCM I-2342 / ORS 2060), this protein is Small ribosomal subunit protein uS12.